Reading from the N-terminus, the 468-residue chain is Adenosylhomocysteinase (468 aa).

Substrate contacts are provided by T57, D132, and E194. NAD(+) is bound at residue 195–197 (TTT). Substrate-binding residues include K224 and D228. NAD(+) is bound by residues N229, 258–263 (GFGDVG), E281, N316, 337–339 (IGH), and N382.

It belongs to the adenosylhomocysteinase family. It depends on NAD(+) as a cofactor.

It is found in the cytoplasm. The catalysed reaction is S-adenosyl-L-homocysteine + H2O = L-homocysteine + adenosine. The protein operates within amino-acid biosynthesis; L-homocysteine biosynthesis; L-homocysteine from S-adenosyl-L-homocysteine: step 1/1. In terms of biological role, may play a key role in the regulation of the intracellular concentration of adenosylhomocysteine. This is Adenosylhomocysteinase from Methylorubrum extorquens (strain CM4 / NCIMB 13688) (Methylobacterium extorquens).